Here is a 231-residue protein sequence, read N- to C-terminus: U1 small nuclear ribonucleoprotein C-1 (231 aa).

The Matrin-type zinc finger occupies 4 to 36 (YYCDYCDTYLTHDSPSVRKQHNAGYKHKANVRT). Pro residues-rich tracts occupy residues 117–127 (APGIPGYPGGP), 134–159 (GAPP…PPGS), and 167–178 (LPRPPTLPPPTS). The disordered stretch occupies residues 117–231 (APGIPGYPGG…SYAQPSEGNH (115 aa)). Positions 181-193 (PGAPIPNSAAPPA) are enriched in low complexity. Residues 199–217 (PPAPAGPTSGAPPAPPTAP) are compositionally biased toward pro residues.

The protein belongs to the U1 small nuclear ribonucleoprotein C family. As to quaternary structure, U1 snRNP is composed of the 7 core Sm proteins B/B', D1, D2, D3, E, F and G that assemble in a heptameric protein ring on the Sm site of the small nuclear RNA to form the core snRNP, and at least 3 U1 snRNP-specific proteins U1-70K, U1-A and U1-C. U1-C interacts with U1 snRNA and the 5' splice-site region of the pre-mRNA.

Its subcellular location is the nucleus. Its function is as follows. Component of the spliceosomal U1 snRNP, which is essential for recognition of the pre-mRNA 5' splice-site and the subsequent assembly of the spliceosome. U1-C is directly involved in initial 5' splice-site recognition for both constitutive and regulated alternative splicing. The interaction with the 5' splice-site seems to precede base-pairing between the pre-mRNA and the U1 snRNA. Stimulates commitment or early (E) complex formation by stabilizing the base pairing of the 5' end of the U1 snRNA and the 5' splice-site region. The protein is U1 small nuclear ribonucleoprotein C-1 of Sorghum bicolor (Sorghum).